The following is a 451-amino-acid chain: Tubulin alpha chain (451 aa).

Residue glutamine 11 participates in GTP binding. Lysine 40 carries the N6-acetyllysine modification. Residues glutamate 71, glycine 144, threonine 145, threonine 179, asparagine 206, and asparagine 228 each contribute to the GTP site. Residue glutamate 71 coordinates Mg(2+). The active site involves glutamate 254.

The protein belongs to the tubulin family. Dimer of alpha and beta chains. A typical microtubule is a hollow water-filled tube with an outer diameter of 25 nm and an inner diameter of 15 nM. Alpha-beta heterodimers associate head-to-tail to form protofilaments running lengthwise along the microtubule wall with the beta-tubulin subunit facing the microtubule plus end conferring a structural polarity. Microtubules usually have 13 protofilaments but different protofilament numbers can be found in some organisms and specialized cells. Mg(2+) serves as cofactor. In terms of processing, undergoes a tyrosination/detyrosination cycle, the cyclic removal and re-addition of a C-terminal tyrosine residue by the enzymes tubulin tyrosine carboxypeptidase (TTCP) and tubulin tyrosine ligase (TTL), respectively. Acetylation of alpha chains at Lys-40 stabilizes microtubules and affects affinity and processivity of microtubule motors. This modification has a role in multiple cellular functions, ranging from cell motility, cell cycle progression or cell differentiation to intracellular trafficking and signaling.

The protein localises to the cytoplasm. The protein resides in the cytoskeleton. The enzyme catalyses GTP + H2O = GDP + phosphate + H(+). Tubulin is the major constituent of microtubules, a cylinder consisting of laterally associated linear protofilaments composed of alpha- and beta-tubulin heterodimers. Microtubules grow by the addition of GTP-tubulin dimers to the microtubule end, where a stabilizing cap forms. Below the cap, tubulin dimers are in GDP-bound state, owing to GTPase activity of alpha-tubulin. This Euglena gracilis protein is Tubulin alpha chain (TUBA).